We begin with the raw amino-acid sequence, 124 residues long: Small ribosomal subunit protein uS12 (124 aa).

Positions 1-22 (MATVNQLVRKPRKRKVAKSDVP) are disordered. Asp-89 carries the 3-methylthioaspartic acid modification. Residues 99–124 (RGSLDTSGVQNRKQGRSKYGTKRPKK) form a disordered region. Basic residues predominate over residues 111–124 (KQGRSKYGTKRPKK).

This sequence belongs to the universal ribosomal protein uS12 family. In terms of assembly, part of the 30S ribosomal subunit. Contacts proteins S8 and S17. May interact with IF1 in the 30S initiation complex.

In terms of biological role, with S4 and S5 plays an important role in translational accuracy. Interacts with and stabilizes bases of the 16S rRNA that are involved in tRNA selection in the A site and with the mRNA backbone. Located at the interface of the 30S and 50S subunits, it traverses the body of the 30S subunit contacting proteins on the other side and probably holding the rRNA structure together. The combined cluster of proteins S8, S12 and S17 appears to hold together the shoulder and platform of the 30S subunit. This chain is Small ribosomal subunit protein uS12, found in Marinomonas sp. (strain MWYL1).